The primary structure comprises 28 residues: Cyclotide vodo I2 (28 aa).

3 cysteine pairs are disulfide-bonded: Cys-4-Cys-18, Cys-8-Cys-20, and Cys-13-Cys-25.

Post-translationally, this is a cyclic peptide. Contains 3 disulfide bonds.

Functionally, probably participates in a plant defense mechanism. This chain is Cyclotide vodo I2, found in Viola odorata (Sweet violet).